The chain runs to 390 residues: S-adenosylmethionine synthase 1 (390 aa).

E9 is a binding site for Mg(2+). An ATP-binding site is contributed by H15. Residue E43 participates in K(+) binding. E56 and Q99 together coordinate L-methionine. Residues 167–169, 235–238, D246, 252–253, A269, K273, and K277 contribute to the ATP site; these read DGK, SGRF, and RK. Residue D246 coordinates L-methionine. Residue K277 coordinates L-methionine.

It belongs to the AdoMet synthase family. As to quaternary structure, homotetramer. Requires Mn(2+) as cofactor. The cofactor is Mg(2+). Co(2+) serves as cofactor. It depends on K(+) as a cofactor.

The protein resides in the cytoplasm. It catalyses the reaction L-methionine + ATP + H2O = S-adenosyl-L-methionine + phosphate + diphosphate. It participates in amino-acid biosynthesis; S-adenosyl-L-methionine biosynthesis; S-adenosyl-L-methionine from L-methionine: step 1/1. In terms of biological role, catalyzes the formation of S-adenosylmethionine from methionine and ATP. The reaction comprises two steps that are both catalyzed by the same enzyme: formation of S-adenosylmethionine (AdoMet) and triphosphate, and subsequent hydrolysis of the triphosphate. This chain is S-adenosylmethionine synthase 1 (SAM1), found in Petunia hybrida (Petunia).